Consider the following 330-residue polypeptide: Glycoprotein integral membrane protein 1 (330 aa).

The first 23 residues, 1–23, serve as a signal peptide directing secretion; that stretch reads MEGAPLGPLALRLLLFVALPASG. At 24–268 the chain is on the extracellular side; sequence WLTTGAPEPP…VFPVFFQFLN (245 aa). 4 N-linked (GlcNAc...) asparagine glycosylation sites follow: Asn-46, Asn-64, Asn-166, and Asn-191. The chain crosses the membrane as a helical span at residues 269-289; the sequence is IMVVGITGAAVVITILKVLFP. At 290-330 the chain is on the cytoplasmic side; sequence VSEYKGILQLDKVDVIPVTAINLYPDGPEKTAENLEDKTCI.

The protein resides in the membrane. The protein is Glycoprotein integral membrane protein 1 (GINM1) of Pongo abelii (Sumatran orangutan).